A 170-amino-acid polypeptide reads, in one-letter code: Large ribosomal subunit protein uL18m (170 aa).

It belongs to the universal ribosomal protein uL18 family. As to quaternary structure, component of the mitochondrial ribosome large subunit (39S) which comprises a 16S rRNA and about 50 distinct proteins.

The protein localises to the mitochondrion. In Caenorhabditis elegans, this protein is Large ribosomal subunit protein uL18m (mrpl-18).